A 497-amino-acid polypeptide reads, in one-letter code: Probable D-lactate dehydrogenase, mitochondrial (497 aa).

One can recognise an FAD-binding PCMH-type domain in the interval 65–246 (HRCRPPDVVV…TKATLRLYGV (182 aa)).

The protein belongs to the FAD-binding oxidoreductase/transferase type 4 family. FAD is required as a cofactor.

It is found in the mitochondrion. It carries out the reaction (R)-lactate + 2 Fe(III)-[cytochrome c] = 2 Fe(II)-[cytochrome c] + pyruvate + 2 H(+). Functionally, involved in D-lactate, but not L-lactate catabolic process. The polypeptide is Probable D-lactate dehydrogenase, mitochondrial (ldhd) (Danio rerio (Zebrafish)).